The sequence spans 270 residues: Tryptophan synthase alpha chain (270 aa).

Residues E49 and D60 each act as proton acceptor in the active site.

Belongs to the TrpA family. As to quaternary structure, tetramer of two alpha and two beta chains.

It carries out the reaction (1S,2R)-1-C-(indol-3-yl)glycerol 3-phosphate + L-serine = D-glyceraldehyde 3-phosphate + L-tryptophan + H2O. Its pathway is amino-acid biosynthesis; L-tryptophan biosynthesis; L-tryptophan from chorismate: step 5/5. The alpha subunit is responsible for the aldol cleavage of indoleglycerol phosphate to indole and glyceraldehyde 3-phosphate. This is Tryptophan synthase alpha chain from Thermobifida fusca (strain YX).